We begin with the raw amino-acid sequence, 298 residues long: MGVTGILQLPRDRFKRTSFFLWVIILFQRTFSIPLGVIHNSTLQVSDVDKLVCRDKLSSTNQLRSVGLNLEGNGVATDVPSATKRWGFRSGVPPKVVNYEAGEWAENCYNLEIKKPDGSECLPAAPDGIRGFPRCRYVHKVSGTGPCAGDFAFHKEGAFFLYDRLASTVIYRGTTFAEGVVAFLILPQAKKDFFSSHPLREPVNATEDPSSGYYSTTIRYQATGFGTNETEYLFEVDNLTYVQLESRFTPQFLLQLNETIYTSGKRSNTTGKLIWKVNPEIDTTIGEWAFWETKKKPH.

A signal peptide spans 1–32 (MGVTGILQLPRDRFKRTSFFLWVIILFQRTFS). N-linked (GlcNAc...) asparagine; by host glycosylation occurs at Asn-40. 2 disulfides stabilise this stretch: Cys-108–Cys-135 and Cys-121–Cys-147. 5 N-linked (GlcNAc...) asparagine; by host glycosylation sites follow: Asn-204, Asn-228, Asn-238, Asn-257, and Asn-268.

The protein belongs to the filoviruses glycoprotein family.

The protein localises to the secreted. This is Super small secreted glycoprotein (GP) from Epomops franqueti (Franquet's epauletted fruit bat).